The primary structure comprises 324 residues: tRNA-modifying protein YgfZ (324 aa).

Position 184 (W184) interacts with folate.

This sequence belongs to the tRNA-modifying YgfZ family.

The protein resides in the cytoplasm. Its function is as follows. Folate-binding protein involved in regulating the level of ATP-DnaA and in the modification of some tRNAs. It is probably a key factor in regulatory networks that act via tRNA modification, such as initiation of chromosomal replication. The sequence is that of tRNA-modifying protein YgfZ from Vibrio vulnificus (strain CMCP6).